The sequence spans 442 residues: Glutamate--tRNA ligase 1 (442 aa).

The 'HIGH' region signature appears at 9–19; sequence PSPTGKLHVGN. Residues 240 to 244 carry the 'KMSKS' region motif; that stretch reads KLSKR. K243 lines the ATP pocket.

This sequence belongs to the class-I aminoacyl-tRNA synthetase family. Glutamate--tRNA ligase type 1 subfamily. As to quaternary structure, monomer.

The protein resides in the cytoplasm. It catalyses the reaction tRNA(Glu) + L-glutamate + ATP = L-glutamyl-tRNA(Glu) + AMP + diphosphate. Catalyzes the attachment of glutamate to tRNA(Glu) in a two-step reaction: glutamate is first activated by ATP to form Glu-AMP and then transferred to the acceptor end of tRNA(Glu). This chain is Glutamate--tRNA ligase 1, found in Novosphingobium aromaticivorans (strain ATCC 700278 / DSM 12444 / CCUG 56034 / CIP 105152 / NBRC 16084 / F199).